The following is a 1247-amino-acid chain: Structural polyprotein (1247 aa).

The tract at residues 52–103 (ALRTVPQKPRRTRKTKKQKQVKQEQQSTRNQKKKAPKQKQTQKKKRPGRRER) is disordered. Basic residues-rich tracts occupy residues 59–71 (KPRR…KQKQ) and 81–100 (NQKK…RPGR). The tract at residues 86–99 (APKQKQTQKKKRPG) is ribosome-binding. A disulfide bond links Cys-112 and Cys-127. Residues 112–260 (CIFEVKHEGK…KITPEGSVEW (149 aa)) enclose the Peptidase S3 domain. The active-site Charge relay system is His-138. The interval 154–159 (KRSSKY) is interaction with spike glycoprotein E2. Active-site charge relay system residues include Asp-160 and Ser-212. The interval 261–273 (SLALPVMCLLANT) is functions as an uncleaved signal peptide for the precursor of protein E3/E2. 9 disulfide bridges follow: Cys-268-Cys-277, Cys-282-Cys-286, Cys-285-Cys-317, Cys-343-Cys-449, Cys-346-Cys-352, Cys-415-Cys-429, Cys-477-Cys-590, Cys-525-Cys-549, and Cys-527-Cys-544. The N-linked (GlcNAc...) asparagine; by host glycan is linked to Asn-272. At 325–691 (NARENFNVYK…YYYELYPTTT (367 aa)) the chain is on the extracellular side. The N-linked (GlcNAc...) asparagine; by host glycan is linked to Asn-587. Residues 692 to 712 (IAVLAAASIVVASLVSLSLGM) form a helical membrane-spanning segment. Residues 713–747 (CICARRRCITPYELTPGATIPFLLGVLCCVKTAKA) lie on the Cytoplasmic side of the membrane. Residues 715–719 (CARRR) form an interaction with the capsid protein region. S-palmitoyl cysteine; by host attachment occurs at residues Cys-720, Cys-740, and Cys-741. The tract at residues 720 to 740 (CITPYELTPGATIPFLLGVLC) is transient transmembrane before p62-6K protein processing. Cys-720 and Cys-741 form a disulfide bridge. Residues 748–762 (ASYYEAATYLWNEQQ) are Extracellular-facing. Residues 763–783 (PLFWLQLLIPLSAAIVACNCL) traverse the membrane as a helical segment. At 784 to 787 (KLLP) the chain is on the cytoplasmic side. A helical membrane pass occupies residues 788-808 (CCCKTLTFLAVMSIGARTVSA). The Extracellular segment spans residues 809–1223 (YEHATVIPNT…AMSWVQKITG (415 aa)). Intrachain disulfides connect Cys-857–Cys-922, Cys-870–Cys-902, Cys-871–Cys-904, and Cys-876–Cys-886. Positions 892–909 (VYPFMWGGAYCFCDAENT) are E1 fusion peptide loop. 2 N-linked (GlcNAc...) asparagine; by host glycosylation sites follow: Asn-949 and Asn-1078. 4 disulfide bridges follow: Cys-1067/Cys-1079, Cys-1109/Cys-1184, Cys-1114/Cys-1188, and Cys-1136/Cys-1178. Residues 1224–1244 (GVGLVVAIAALILIIVLCVSF) form a helical membrane-spanning segment. Cys-1241 carries the S-palmitoyl cysteine; by host lipid modification. The Cytoplasmic portion of the chain corresponds to 1245 to 1247 (SRH).

Homodimer. Homomultimer. Interacts with host karyopherin KPNA4; this interaction allows the nuclear import of the viral capsid protein. Interacts with spike glycoprotein E2. Interacts with host IRAK1; the interaction leads to inhibition of IRAK1-dependent signaling. In terms of assembly, the precursor of protein E3/E2 and E1 form a heterodimer shortly after synthesis. As to quaternary structure, the precursor of protein E3/E2 and E1 form a heterodimer shortly after synthesis. Processing of the precursor of protein E3/E2 into E2 and E3 results in a heterodimer of the spike glycoproteins E2 and E1. Spike at virion surface are constituted of three E2-E1 heterodimers. After target cell attachment and endocytosis, E1 change conformation to form homotrimers. Interacts with 6K protein. Interacts with spike glycoprotein E1. Processing of the precursor of protein E3/E2 into E2 and E3 results in a heterodimer of the spike glycoproteins E2 and E1. Spike at virion surface are constituted of a trimer of E2-E1 heterodimers. Interacts with 6K protein. Interacts with host MXRA8; this interaction mediates virus entry. In terms of assembly, oligomer. Interacts with spike glycoprotein E1. Interacts with spike glycoprotein E2. In terms of processing, structural polyprotein: Specific enzymatic cleavages in vivo yield mature proteins. Capsid protein is auto-cleaved during polyprotein translation, unmasking a signal peptide at the N-terminus of the precursor of E3/E2. The remaining polyprotein is then targeted to the host endoplasmic reticulum, where host signal peptidase cleaves it into pE2, 6K and E1 proteins. pE2 is further processed to mature E3 and E2 by host furin in trans-Golgi vesicle. Post-translationally, palmitoylated via thioester bonds. These palmitoylations may induce disruption of the C-terminus transmembrane. This would result in the reorientation of E2 C-terminus from lumenal to cytoplasmic side. N-glycosylated. In terms of processing, palmitoylated via thioester bonds.

It localises to the virion. The protein resides in the host cytoplasm. It is found in the host cell membrane. Its subcellular location is the virion membrane. The protein localises to the host Golgi apparatus. It localises to the host trans-Golgi network. The protein resides in the host endoplasmic reticulum. It catalyses the reaction Autocatalytic release of the core protein from the N-terminus of the togavirus structural polyprotein by hydrolysis of a -Trp-|-Ser- bond.. Possesses a protease activity that results in its autocatalytic cleavage from the nascent structural protein. Following its self-cleavage, the capsid protein transiently associates with ribosomes, and within several minutes the protein binds to viral RNA and rapidly assembles into icosahedric core particles. The resulting nucleocapsid eventually associates with the cytoplasmic domain of the spike glycoprotein E2 at the cell membrane, leading to budding and formation of mature virions. In case of infection, new virions attach to target cells and after clathrin-mediated endocytosis their membrane fuses with the host endosomal membrane. This leads to the release of the nucleocapsid into the cytoplasm, followed by an uncoating event necessary for the genomic RNA to become accessible. The uncoating might be triggered by the interaction of capsid proteins with ribosomes. Binding of ribosomes would release the genomic RNA since the same region is genomic RNA-binding and ribosome-binding. In terms of biological role, provides the signal sequence for the translocation of the precursor of protein E3/E2 to the host endoplasmic reticulum. Mediates pH protection of spike glycoprotein E1 during the transport via the secretory pathway. Its function is as follows. Plays a role in viral attachment to target host cell, by binding to the cell receptor MXRA8. Synthesized as a p62 precursor which is processed by furin at the cell membrane just before virion budding, giving rise to E2-E1 heterodimer. The p62-E1 heterodimer is stable, whereas E2-E1 is unstable and dissociate at low pH. p62 is processed at the last step, presumably to avoid E1 fusion activation before its final export to cell surface. E2 C-terminus contains a transitory transmembrane that would be disrupted by palmitoylation, resulting in reorientation of the C-terminal tail from lumenal to cytoplasmic side. This step is critical since E2 C-terminus is involved in budding by interacting with capsid proteins. This release of E2 C-terminus in cytoplasm occurs lately in protein export, and precludes premature assembly of particles at the endoplasmic reticulum membrane. Functionally, acts as a viroporin that participates in virus glycoprotein processing and transport to the plasma membrane, cell permeabilization and budding of viral particles. Disrupts the calcium homeostasis of the cell, probably at the endoplasmic reticulum level. This leads to cytoplasmic calcium elevation. Because of its lipophilic properties, the 6K protein is postulated to influence the selection of lipids that interact with the transmembrane domains of the glycoproteins, which, in turn, affects the deformability of the bilayer required for the extreme curvature that occurs as budding proceeds. Present in low amount in virions, about 3% compared to viral glycoproteins. Class II viral fusion protein. Fusion activity is inactive as long as E1 is bound to E2 in mature virion. After virus attachment to target cell via host MXRA8 and endocytosis, acidification of the endosome induce dissociation of E1/E2 heterodimer and concomitant trimerization of the E1 subunits. This E1 trimer is fusion active, and promotes release of viral nucleocapsid in cytoplasm after endosome and viral membrane fusion. Efficient fusion requires the presence of cholesterol and sphingolipid in the target membrane. The sequence is that of Structural polyprotein from O'nyong-nyong virus (strain SG650) (ONNV).